The primary structure comprises 429 residues: tRNA-2-methylthio-N(6)-dimethylallyladenosine synthase (429 aa).

Residues 2-115 (KLLYLQTLGC…ISEAVKTPKF (114 aa)) enclose the MTTase N-terminal domain. [4Fe-4S] cluster is bound by residues cysteine 11, cysteine 46, cysteine 78, cysteine 147, cysteine 151, and cysteine 154. A Radical SAM core domain is found at 133-365 (RGSPYKAFVN…QSRHNEILDE (233 aa)). One can recognise a TRAM domain in the interval 368–429 (KNQVGKIFDV…RMVLYGKITA (62 aa)).

The protein belongs to the methylthiotransferase family. MiaB subfamily. In terms of assembly, monomer. [4Fe-4S] cluster is required as a cofactor.

The protein localises to the cytoplasm. It catalyses the reaction N(6)-dimethylallyladenosine(37) in tRNA + (sulfur carrier)-SH + AH2 + 2 S-adenosyl-L-methionine = 2-methylsulfanyl-N(6)-dimethylallyladenosine(37) in tRNA + (sulfur carrier)-H + 5'-deoxyadenosine + L-methionine + A + S-adenosyl-L-homocysteine + 2 H(+). Its function is as follows. Catalyzes the methylthiolation of N6-(dimethylallyl)adenosine (i(6)A), leading to the formation of 2-methylthio-N6-(dimethylallyl)adenosine (ms(2)i(6)A) at position 37 in tRNAs that read codons beginning with uridine. This is tRNA-2-methylthio-N(6)-dimethylallyladenosine synthase from Campylobacter hominis (strain ATCC BAA-381 / DSM 21671 / CCUG 45161 / LMG 19568 / NCTC 13146 / CH001A).